The chain runs to 120 residues: U3-hexatoxin-Hi1a (120 aa).

An N-terminal signal peptide occupies residues 1-19 (MKLLYFFVVITVLVAVAAA). Residues 20 to 51 (LPAKTEEQIAAEENQLVEDLVQYAGTRLTRKR) constitute a propeptide that is removed on maturation.

It belongs to the neurotoxin 25 family. F7 subfamily. Contains 4 disulfide bonds. Expressed by the venom gland.

The protein resides in the secreted. Weak insecticidal toxin with probable ion channel impairing activity. In vivo, induces paralysis when injected into sheep blowflies (L.cuprina). Shows weak toxicity, since it is only toxic at high doses, and flies recover within 24 hours. This Hadronyche infensa (Fraser island funnel-web spider) protein is U3-hexatoxin-Hi1a.